The following is a 373-amino-acid chain: Chorismate synthase (373 aa).

Arginine 46 is an NADP(+) binding site. FMN contacts are provided by residues 123–125, 251–252, glycine 295, 310–314, and arginine 337; these read RSS, NA, and KPTPS.

Belongs to the chorismate synthase family. Requires FMNH2 as cofactor.

The enzyme catalyses 5-O-(1-carboxyvinyl)-3-phosphoshikimate = chorismate + phosphate. It participates in metabolic intermediate biosynthesis; chorismate biosynthesis; chorismate from D-erythrose 4-phosphate and phosphoenolpyruvate: step 7/7. Catalyzes the anti-1,4-elimination of the C-3 phosphate and the C-6 proR hydrogen from 5-enolpyruvylshikimate-3-phosphate (EPSP) to yield chorismate, which is the branch point compound that serves as the starting substrate for the three terminal pathways of aromatic amino acid biosynthesis. This reaction introduces a second double bond into the aromatic ring system. In Methanococcus maripaludis (strain C7 / ATCC BAA-1331), this protein is Chorismate synthase.